A 387-amino-acid chain; its full sequence is ATP phosphoribosyltransferase regulatory subunit (387 aa).

It belongs to the class-II aminoacyl-tRNA synthetase family. HisZ subfamily. Heteromultimer composed of HisG and HisZ subunits.

It is found in the cytoplasm. It participates in amino-acid biosynthesis; L-histidine biosynthesis; L-histidine from 5-phospho-alpha-D-ribose 1-diphosphate: step 1/9. Functionally, required for the first step of histidine biosynthesis. May allow the feedback regulation of ATP phosphoribosyltransferase activity by histidine. The sequence is that of ATP phosphoribosyltransferase regulatory subunit from Psychrobacter arcticus (strain DSM 17307 / VKM B-2377 / 273-4).